The sequence spans 79 residues: RNA-binding protein KhpA (79 aa).

One can recognise a KH domain in the interval 32–79 (FLEYHLNLDQSDVGRVIGRKGRTISAIRTIVYSVPTEYKKVRIVIDEK).

This sequence belongs to the KhpA RNA-binding protein family. In terms of assembly, forms a complex with KhpB. KhpA and KhpB colocalize throughout the cell cycle, with some increase at midcell in dividing cells.

It localises to the cytoplasm. Functionally, a probable RNA chaperone. Forms a complex with KhpB which presumably binds to about 170 cellular RNAs (mRNA, tRNA intergenic RNA and sRNAs); the proteins alone each bind the same set of RNAs. A mutation in this gene suppresses the requirement for PBP2b (penA, a transpeptidase) in peripheral peptidoglycan (PG) synthesis. Probably plays a role in PG homeostasis and regulating peripheral PG synthesis. This Streptococcus pneumoniae serotype 2 (strain D39 / NCTC 7466) protein is RNA-binding protein KhpA.